The chain runs to 347 residues: Histidinol-phosphate aminotransferase (347 aa).

N6-(pyridoxal phosphate)lysine is present on Lys209.

This sequence belongs to the class-II pyridoxal-phosphate-dependent aminotransferase family. Histidinol-phosphate aminotransferase subfamily. In terms of assembly, homodimer. Pyridoxal 5'-phosphate serves as cofactor.

It carries out the reaction L-histidinol phosphate + 2-oxoglutarate = 3-(imidazol-4-yl)-2-oxopropyl phosphate + L-glutamate. It functions in the pathway amino-acid biosynthesis; L-histidine biosynthesis; L-histidine from 5-phospho-alpha-D-ribose 1-diphosphate: step 7/9. This Geotalea daltonii (strain DSM 22248 / JCM 15807 / FRC-32) (Geobacter daltonii) protein is Histidinol-phosphate aminotransferase.